A 213-amino-acid polypeptide reads, in one-letter code: uncharacterized protein (213 aa).

This is an uncharacterized protein from Escherichia coli (strain K12).